The sequence spans 592 residues: Arginine--tRNA ligase (592 aa).

The 'HIGH' region signature appears at 134-144 (ANPTGPLHVGH).

The protein belongs to the class-I aminoacyl-tRNA synthetase family. Monomer.

The protein localises to the cytoplasm. The enzyme catalyses tRNA(Arg) + L-arginine + ATP = L-arginyl-tRNA(Arg) + AMP + diphosphate. This chain is Arginine--tRNA ligase, found in Coxiella burnetii (strain RSA 493 / Nine Mile phase I).